Here is a 106-residue protein sequence, read N- to C-terminus: Large ribosomal subunit protein uL24 (106 aa).

Residues 84-97 (EKIGRELGAKEKAR) are compositionally biased toward basic and acidic residues. Residues 84 to 106 (EKIGRELGAKEKARLQKRKTAAK) form a disordered region.

The protein belongs to the universal ribosomal protein uL24 family. In terms of assembly, part of the 50S ribosomal subunit.

In terms of biological role, one of two assembly initiator proteins, it binds directly to the 5'-end of the 23S rRNA, where it nucleates assembly of the 50S subunit. Functionally, one of the proteins that surrounds the polypeptide exit tunnel on the outside of the subunit. The chain is Large ribosomal subunit protein uL24 from Anaeromyxobacter dehalogenans (strain 2CP-1 / ATCC BAA-258).